The sequence spans 80 residues: Toxin Acra I-3 (80 aa).

A signal peptide spans 1–22 (MMKLVLLSVIVILFSLIGSIHG). The 56-residue stretch at 25–80 (VPGNYPLDSSGNKYPCTVLGDNQSCIDVCKKHGVKYGYCYGFKCWCEYLKDKNVSL) folds into the LCN-type CS-alpha/beta domain. 3 cysteine pairs are disulfide-bonded: Cys40-Cys63, Cys49-Cys68, and Cys53-Cys70.

The protein belongs to the long (3 C-C) scorpion toxin superfamily. Sodium/Potassium channel inhibitor family. In terms of tissue distribution, expressed by the venom gland.

Its subcellular location is the secreted. Its function is as follows. Probable neurotoxin that inhibits ion channels. Is toxic to mice. This chain is Toxin Acra I-3, found in Androctonus crassicauda (Arabian fat-tailed scorpion).